Here is a 149-residue protein sequence, read N- to C-terminus: Calmodulin-1 (149 aa).

A2 carries the post-translational modification N-acetylalanine. EF-hand domains follow at residues 8-43, 44-79, 81-116, and 117-149; these read DQIAEFKEAFSLFDKDGDGCITTKELGTVMRSLGQN, PTEAELQDMINEVDADGNGTIDFPEFLNLMARKMKD, DSEEELKEAFRVFDKDQNGFISAAELRHVMTNLGEK, and LTDEEVDEMIREADVDGDGQINYEEFVKVMMAK. Ca(2+) is bound by residues D21, D23, D25, C27, E32, D57, D59, N61, T63, E68, D94, D96, N98, and E105. K116 is modified (N6,N6,N6-trimethyllysine). Residues D130, D132, D134, Q136, and E141 each contribute to the Ca(2+) site.

The protein belongs to the calmodulin family.

Calmodulin mediates the control of a large number of enzymes, ion channels and other proteins by Ca(2+). Among the enzymes to be stimulated by the calmodulin-Ca(2+) complex are a number of protein kinases and phosphatases. This is Calmodulin-1 (CAM1-1) from Oryza sativa subsp. indica (Rice).